We begin with the raw amino-acid sequence, 66 residues long: Large ribosomal subunit protein bL35 (66 aa).

The disordered stretch occupies residues 1–26; the sequence is MPKQKTHRGAAKRFKKTGSGKLKRSH.

The protein belongs to the bacterial ribosomal protein bL35 family.

This chain is Large ribosomal subunit protein bL35, found in Bacillus anthracis.